The sequence spans 303 residues: Flavin-dependent thymidylate synthase (303 aa).

Residues 1–21 form a disordered region; that stretch reads MALTSEQRAEIEAQRSEPQLT. The region spanning 43–256 is the ThyX domain; that stretch reads GFLRVVDYMG…PATAAAFEEY (214 aa). Residues Thr-89, 112–114, and Glu-120 contribute to the FAD site; that span reads RHR. DUMP contacts are provided by residues 109-112, 120-124, and Arg-195; these read QWIR and EYSAR. A ThyX motif motif is present at residues 112 to 122; it reads RHRMASVNEYS. Residues 211-213 and His-217 each bind FAD; that span reads DLH. A dUMP-binding site is contributed by Arg-222. Catalysis depends on Arg-222, which acts as the Involved in ionization of N3 of dUMP, leading to its activation.

This sequence belongs to the thymidylate synthase ThyX family. In terms of assembly, homotetramer. It depends on FAD as a cofactor.

The enzyme catalyses dUMP + (6R)-5,10-methylene-5,6,7,8-tetrahydrofolate + NADPH + H(+) = dTMP + (6S)-5,6,7,8-tetrahydrofolate + NADP(+). It functions in the pathway pyrimidine metabolism; dTTP biosynthesis. Catalyzes the reductive methylation of 2'-deoxyuridine-5'-monophosphate (dUMP) to 2'-deoxythymidine-5'-monophosphate (dTMP) while utilizing 5,10-methylenetetrahydrofolate (mTHF) as the methyl donor, and NADPH and FADH(2) as the reductant. In Gluconobacter oxydans (strain 621H) (Gluconobacter suboxydans), this protein is Flavin-dependent thymidylate synthase.